The chain runs to 256 residues: Adenosylcobinamide-GDP ribazoletransferase (256 aa).

The next 6 membrane-spanning stretches (helical) occupy residues 40–60 (YFPLIGWLVGAVAAAVYWLVL), 64–84 (PAQGVAVAVSMGATLLLTGAF), 114–134 (IGAFGAIAVCMALLLKWQLLS), 143–163 (ILVAMVAAHAASRAAAVSHLL), 194–214 (VVPLLWFGPMCAALIVVGLIL), and 234–254 (CLGMAQQIFELLILWGLLAWM).

This sequence belongs to the CobS family. Requires Mg(2+) as cofactor.

The protein localises to the cell inner membrane. It catalyses the reaction alpha-ribazole + adenosylcob(III)inamide-GDP = adenosylcob(III)alamin + GMP + H(+). The catalysed reaction is alpha-ribazole 5'-phosphate + adenosylcob(III)inamide-GDP = adenosylcob(III)alamin 5'-phosphate + GMP + H(+). The protein operates within cofactor biosynthesis; adenosylcobalamin biosynthesis; adenosylcobalamin from cob(II)yrinate a,c-diamide: step 7/7. In terms of biological role, joins adenosylcobinamide-GDP and alpha-ribazole to generate adenosylcobalamin (Ado-cobalamin). Also synthesizes adenosylcobalamin 5'-phosphate from adenosylcobinamide-GDP and alpha-ribazole 5'-phosphate. The chain is Adenosylcobinamide-GDP ribazoletransferase from Ralstonia pickettii (strain 12J).